Reading from the N-terminus, the 453-residue chain is Phosphoglucosamine mutase (453 aa).

Catalysis depends on serine 102, which acts as the Phosphoserine intermediate. Residues serine 102, aspartate 244, aspartate 246, and aspartate 248 each coordinate Mg(2+). The residue at position 102 (serine 102) is a Phosphoserine.

It belongs to the phosphohexose mutase family. Mg(2+) serves as cofactor. In terms of processing, activated by phosphorylation.

It catalyses the reaction alpha-D-glucosamine 1-phosphate = D-glucosamine 6-phosphate. Its function is as follows. Catalyzes the conversion of glucosamine-6-phosphate to glucosamine-1-phosphate. The protein is Phosphoglucosamine mutase of Pelobacter propionicus (strain DSM 2379 / NBRC 103807 / OttBd1).